The following is a 458-amino-acid chain: BTB/POZ domain-containing protein At5g41330 (458 aa).

Residues 11–72 (NVVSINVGGR…LRTGNLPARS (62 aa)) form the BTB domain. WD repeat units lie at residues 259 to 305 (DSAI…MVWE), 360 to 399 (LNER…LVGN), and 421 to 458 (SGEN…GISI).

It participates in protein modification; protein ubiquitination. May act as a substrate-specific adapter of an E3 ubiquitin-protein ligase complex (CUL3-RBX1-BTB) which mediates the ubiquitination and subsequent proteasomal degradation of target proteins. This is BTB/POZ domain-containing protein At5g41330 from Arabidopsis thaliana (Mouse-ear cress).